Consider the following 158-residue polypeptide: Transcriptional repressor NrdR (158 aa).

Residues 3 to 34 fold into a zinc finger; that stretch reads CPSCQNTDSRVLESRAADGGRSVRRRRECLNC. The ATP-cone domain maps to 49–139; the sequence is ITVIKRDGCR…VYRQFRGIDD (91 aa).

It belongs to the NrdR family. The cofactor is Zn(2+).

Negatively regulates transcription of bacterial ribonucleotide reductase nrd genes and operons by binding to NrdR-boxes. The protein is Transcriptional repressor NrdR of Synechococcus sp. (strain CC9902).